The chain runs to 498 residues: Glycerol kinase (498 aa).

Thr11 contacts ADP. ATP contacts are provided by Thr11, Ser12, and Ser13. Position 11 (Thr11) interacts with sn-glycerol 3-phosphate. Position 15 (Arg15) interacts with ADP. Arg81, Glu82, Tyr133, and Asp242 together coordinate sn-glycerol 3-phosphate. Glycerol-binding residues include Arg81, Glu82, Tyr133, Asp242, and Gln243. Residues Thr264 and Gly307 each coordinate ADP. The ATP site is built by Thr264, Gly307, Gln311, and Gly412. ADP-binding residues include Gly412 and Asn416.

It belongs to the FGGY kinase family.

It catalyses the reaction glycerol + ATP = sn-glycerol 3-phosphate + ADP + H(+). Its pathway is polyol metabolism; glycerol degradation via glycerol kinase pathway; sn-glycerol 3-phosphate from glycerol: step 1/1. Inhibited by fructose 1,6-bisphosphate (FBP). In terms of biological role, key enzyme in the regulation of glycerol uptake and metabolism. Catalyzes the phosphorylation of glycerol to yield sn-glycerol 3-phosphate. The sequence is that of Glycerol kinase from Acidovorax ebreus (strain TPSY) (Diaphorobacter sp. (strain TPSY)).